An 88-amino-acid chain; its full sequence is Small ribosomal subunit protein uS19 (88 aa).

It belongs to the universal ribosomal protein uS19 family.

In terms of biological role, protein S19 forms a complex with S13 that binds strongly to the 16S ribosomal RNA. The protein is Small ribosomal subunit protein uS19 (rpsS) of Mycoplasma capricolum subsp. capricolum (strain California kid / ATCC 27343 / NCTC 10154).